The primary structure comprises 127 residues: Mating pheromone 4 (127 aa).

The N-terminal stretch at 1 to 16 (MKAIFIILAILMVTQA) is a signal peptide. A propeptide spanning residues 17–42 (FKMTSKVKSMNMSRNMSKNTSTLGTK) is cleaved from the precursor.

The protein localises to the secreted. Functionally, mating ciliate pheromones (or gamones) are diffusible extracellular communication signals that distinguish different intraspecific classes of cells commonly referred to as 'mating types'. They prepare the latter for conjugation by changing their cell surface properties. In Euplotoides octocarinatus (Freshwater ciliate), this protein is Mating pheromone 4 (PHR4).